The following is a 263-amino-acid chain: HTH-type transcriptional repressor NanR (263 aa).

A disordered region spans residues 1–23; that stretch reads MSPMNAFDPQAEDSTTTIGRNLR. One can recognise an HTH gntR-type domain in the interval 30–98; the sequence is KKLSEMVEEE…NGERARVSRP (69 aa). A DNA-binding region (H-T-H motif) is located at residues 58–77; it reads ERELMAFFNVGRPSVREALA.

Belongs to the NanR family.

Transcriptional repressor that controls expression of the genes required for the catabolism of sialic acids. The chain is HTH-type transcriptional repressor NanR from Escherichia coli O45:K1 (strain S88 / ExPEC).